The following is a 393-amino-acid chain: Dual specificity mitogen-activated protein kinase kinase 1 (393 aa).

The tract at residues 1 to 27 (MPKKKPTPIQLNPAPDGSAVNGTSSAE) is disordered. One can recognise a Protein kinase domain in the interval 68–361 (FEKISELGAG…LKQLMVHAFI (294 aa)). Residues 74 to 82 (LGAGNGGVV) and K97 each bind ATP. The active-site Proton acceptor is D190. S218 and S222 each carry phosphoserine; by RAF. Residues 270–307 (ELELLFGCQVEGDAAETPPRPRTPGRPLSSYGMDSRPP) form an RAF1-binding region. A Phosphothreonine modification is found at T286. Position 292 is a phosphothreonine; by MAPK1 (T292). Residue S298 is modified to Phosphoserine; by PAK.

It belongs to the protein kinase superfamily. STE Ser/Thr protein kinase family. MAP kinase kinase subfamily. In terms of assembly, found in a complex with at least BRAF, HRAS, MAP2K1, MAPK3/ERK1 and RGS14. Forms a heterodimer with MAP2K2/MEK2. Forms heterodimers with KSR2 which further dimerize to form tetramers. Interacts with KSR1 or KSR2 and BRAF; the interaction with KSR1 or KSR2 mediates KSR1-BRAF or KSR2-BRAF dimerization. Interacts with ARBB2, LAMTOR3, MAPK1/ERK2 and RAF1. Interacts with MAPK1/ERK2. Interacts with MORG1. Interacts with PPARG. Interacts with VRK2. Interacts with SGK1. Interacts with BIRC6/bruce. Interacts with KAT7; the interaction promotes KAT7 phosphorylation. Interacts with RAF1 and NEK10; the interaction is required for ERK1/2-signaling pathway activation in response to UV irradiation. Interacts with TRAF3IP3. Interacts with MOS. In terms of processing, phosphorylation at Ser-218 and Ser-222 by MAP kinase kinase kinases (BRAF or MEKK1) positively regulates kinase activity. Also phosphorylated at Thr-292 by MAPK1/ERK2 and at Ser-298 by PAK. MAPK1/ERK2 phosphorylation of Thr-292 occurs in response to cellular adhesion and leads to inhibition of Ser-298 phosphorylation by PAK. Autophosphorylated at Ser-218 and Ser-222, autophosphosphorylation is promoted by NEK10 following UV irradiation.

The protein resides in the cytoplasm. It localises to the cytoskeleton. Its subcellular location is the microtubule organizing center. It is found in the centrosome. The protein localises to the spindle pole body. The protein resides in the nucleus. It localises to the membrane. The enzyme catalyses L-seryl-[protein] + ATP = O-phospho-L-seryl-[protein] + ADP + H(+). It catalyses the reaction L-threonyl-[protein] + ATP = O-phospho-L-threonyl-[protein] + ADP + H(+). It carries out the reaction L-tyrosyl-[protein] + ATP = O-phospho-L-tyrosyl-[protein] + ADP + H(+). With respect to regulation, ras proteins such as HRAS mediate the activation of RAF proteins such as RAF1 or BRAF which in turn activate extracellular signal-regulated kinases (ERK) through MAPK (mitogen-activated protein kinases) and ERK kinases MAP2K1/MEK1 and MAP2K2/MEK2. Activation occurs through phosphorylation of Ser-218 and Ser-222. MAP2K1/MEK1 binds KSR1 or KSR2 releasing the inhibitory intramolecular interaction between KSR1 or KSR2 protein kinase and N-terminal domains. This allows KSR1 or KSR2 dimerization with BRAF leading to BRAF activation and phosphorylation of MAP2K1. MAP2K1/MEK1 is also the target of negative feed-back regulation by its substrate kinases, such as MAPK1/ERK2. These phosphorylate MAP2K1/MEK1 on Thr-292, thereby facilitating dephosphorylation of the activating residues Ser-218 and Ser-222. Inhibited by serine/threonine phosphatase 2A. Dual specificity protein kinase which acts as an essential component of the MAP kinase signal transduction pathway. Binding of extracellular ligands such as growth factors, cytokines and hormones to their cell-surface receptors activates RAS and this initiates RAF1 activation. RAF1 then further activates the dual-specificity protein kinases MAP2K1/MEK1 and MAP2K2/MEK2. Both MAP2K1/MEK1 and MAP2K2/MEK2 function specifically in the MAPK/ERK cascade, and catalyze the concomitant phosphorylation of a threonine and a tyrosine residue in a Thr-Glu-Tyr sequence located in the extracellular signal-regulated kinases MAPK3/ERK1 and MAPK1/ERK2, leading to their activation and further transduction of the signal within the MAPK/ERK cascade. Activates BRAF in a KSR1 or KSR2-dependent manner; by binding to KSR1 or KSR2 releases the inhibitory intramolecular interaction between KSR1 or KSR2 protein kinase and N-terminal domains which promotes KSR1 or KSR2-BRAF dimerization and BRAF activation. Depending on the cellular context, this pathway mediates diverse biological functions such as cell growth, adhesion, survival and differentiation, predominantly through the regulation of transcription, metabolism and cytoskeletal rearrangements. One target of the MAPK/ERK cascade is peroxisome proliferator-activated receptor gamma (PPARG), a nuclear receptor that promotes differentiation and apoptosis. MAP2K1/MEK1 has been shown to export PPARG from the nucleus. The MAPK/ERK cascade is also involved in the regulation of endosomal dynamics, including lysosome processing and endosome cycling through the perinuclear recycling compartment (PNRC), as well as in the fragmentation of the Golgi apparatus during mitosis. This is Dual specificity mitogen-activated protein kinase kinase 1 from Rattus norvegicus (Rat).